A 149-amino-acid chain; its full sequence is Nucleoside diphosphate kinase 1 (149 aa).

Residues K9, F57, R85, T91, R102, and N112 each coordinate ATP. H115 functions as the Pros-phosphohistidine intermediate in the catalytic mechanism.

As to quaternary structure, homohexamer. It depends on Mg(2+) as a cofactor.

The catalysed reaction is a 2'-deoxyribonucleoside 5'-diphosphate + ATP = a 2'-deoxyribonucleoside 5'-triphosphate + ADP. It carries out the reaction a ribonucleoside 5'-diphosphate + ATP = a ribonucleoside 5'-triphosphate + ADP. Major role in the synthesis of nucleoside triphosphates other than ATP. The ATP gamma phosphate is transferred to the NDP beta phosphate via a ping-pong mechanism, using a phosphorylated active-site intermediate. This NDK is microtubule-associated. This Oryza sativa subsp. indica (Rice) protein is Nucleoside diphosphate kinase 1 (NDKR).